The primary structure comprises 684 residues: Phenoloxidase 2 (684 aa).

A propeptide spans 1 to 51 (MSNTAVLNDLVALYDRPTEPMFRVKAKKSFKVPKEYVTDRFKNVAVEISNR) (removed by PPAF1). N81 and N91 each carry an N-linked (GlcNAc...) asparagine glycan. The Cu cation site is built by H209, H213, and H238. A glycan (N-linked (GlcNAc...) asparagine) is linked at N330. Residue E350 is the Proton acceptor of the active site. Residues H365, H369, and H405 each contribute to the Cu cation site. N-linked (GlcNAc...) asparagine glycans are attached at residues N416, N487, N491, and N546. Disulfide bonds link C581–C623 and C583–C630.

Belongs to the tyrosinase family. As to quaternary structure, dimer. Might form a homodimer or a heterodimer with PPO1. Might interact with PPAF2 (via CLIP domain); the interaction might be required for PPO2 activity. The cofactor is Cu(2+). In terms of processing, precursor cleaved by PPAF1. Hemocytes.

Its subcellular location is the secreted. In terms of biological role, this is a copper-containing oxidase that functions in the formation of pigments such as melanins and other polyphenolic compounds. Catalyzes the oxidation of o-diphenols (N-acetyldopamine, 4-methylcatechol and dopamine). Cannot oxidize monophenols and p-phenols (L-tyrosine, tyramine, gentisic acid and hydroquinone). Binds to the surface of hemocytes and is involved in hemocyte melanization. Activation of the enzyme in response to bacterial lipopolysaccharides (LPS) suggests it may play a role in innate immunity. The protein is Phenoloxidase 2 of Holotrichia diomphalia (Korean black chafer).